Reading from the N-terminus, the 859-residue chain is Alanine--tRNA ligase (859 aa).

Zn(2+) is bound by residues H562, H566, C664, and H668.

Belongs to the class-II aminoacyl-tRNA synthetase family. It depends on Zn(2+) as a cofactor.

It localises to the cytoplasm. It catalyses the reaction tRNA(Ala) + L-alanine + ATP = L-alanyl-tRNA(Ala) + AMP + diphosphate. Catalyzes the attachment of alanine to tRNA(Ala) in a two-step reaction: alanine is first activated by ATP to form Ala-AMP and then transferred to the acceptor end of tRNA(Ala). Also edits incorrectly charged Ser-tRNA(Ala) and Gly-tRNA(Ala) via its editing domain. The chain is Alanine--tRNA ligase from Aliivibrio fischeri (strain ATCC 700601 / ES114) (Vibrio fischeri).